A 513-amino-acid polypeptide reads, in one-letter code: Calcium-dependent protein kinase 2 (513 aa).

Glycine 2 carries N-myristoyl glycine lipidation. The region spanning 72–326 is the Protein kinase domain; it reads YIIDEKLGQG…IEEALNHPWI (255 aa). ATP contacts are provided by residues 78–86 and lysine 101; that span reads LGQGTYGCV. Aspartate 192 serves as the catalytic Proton acceptor. The J domain autoinhibitory motif signature appears at 345–353; that stretch reads NLKNFKKEN. The interval 345 to 380 is j domain; sequence NLKNFKKENELKKIALTIIAKHLCDVEINNLRNIFI. Positions 354-363 match the J domain EF-hand interaction motif motif; it reads ELKKIALTII. EF-hand domains are found at residues 370-405, 406-441, 442-477, and 480-513; these read VEINNLRNIFIALDVDNSGTLSSQEILDGLKKIGYQ, KIPPDIHQVLRDIDSNASGQIHYTDFLAATIDKQTY, LKKEVCLIPFKFFDIDGNGKISVEELKRIFGRDDIE, and LIDKAIDSLLQEVDLNGDGEIDFHEFMLMMSKKK. Aspartate 383, aspartate 385, serine 387, threonine 389, and glutamate 394 together coordinate Ca(2+). Aspartate 455, aspartate 457, asparagine 459, lysine 461, glutamate 466, aspartate 493, asparagine 495, aspartate 497, glutamate 499, and glutamate 504 together coordinate Ca(2+).

The protein belongs to the protein kinase superfamily. Ser/Thr protein kinase family. CDPK subfamily. As to quaternary structure, monomer. Mg(2+) is required as a cofactor. Myristoylated; myristoylation may target it to different subcellular compartments. Post-translationally, autophosphorylated in vitro.

The catalysed reaction is L-seryl-[protein] + ATP = O-phospho-L-seryl-[protein] + ADP + H(+). The enzyme catalyses L-threonyl-[protein] + ATP = O-phospho-L-threonyl-[protein] + ADP + H(+). Activated by calcium. Upon calcium binding to the EF-hand domains, the C-terminus of the junction domain (J domain) undergoes a conformational change which results in the dissociation of the pseudo-substrate inhibitory motif from the catalytic domain. This, in turn, may facilitate the autophosphorylation of the activation loop at Thr-232, which leads to the kinase activation. Its function is as follows. Calcium-dependent protein kinase which acts as a sensor and effector of intracellular Ca(2+) levels probably in part downstream of cGMP-activated PKG kinase. During male gametogenesis in the mosquito gut, required for male exflagellation, possibly by regulating male gamete exit from the host erythrocytes. Not required for asexual blood stage proliferation. This chain is Calcium-dependent protein kinase 2, found in Plasmodium falciparum (isolate K1 / Thailand).